A 2338-amino-acid chain; its full sequence is Proto-oncogene tyrosine-protein kinase ROS (2338 aa).

The signal sequence occupies residues 1-27; it reads MKRIRWLTPKPATFVVLGCVWISVAQG. At 28–1853 the chain is on the extracellular side; sequence TILSSCLTSC…EDGFWITETS (1826 aa). Asparagine 52 and asparagine 77 each carry an N-linked (GlcNAc...) asparagine glycan. Fibronectin type-III domains are found at residues 110–205 and 206–294; these read LPTA…VPET and APFI…PSPA. N-linked (GlcNAc...) asparagine glycans are attached at residues asparagine 333, asparagine 361, asparagine 480, asparagine 623, asparagine 934, and asparagine 1010. The Fibronectin type-III 3 domain occupies 566–666; the sequence is LPGHPQEVSV…EPSVGTTLVP (101 aa). Fibronectin type-III domains lie at 942 to 1037 and 1038 to 1145; these read IPDS…SVPS and APEN…TSEI. N-linked (GlcNAc...) asparagine glycosylation is present at asparagine 1298. 4 consecutive Fibronectin type-III domains span residues 1440-1548, 1549-1648, 1650-1743, and 1744-1845; these read VASN…TKSG, VPGA…VNMF, TPEK…TKAG, and VPSK…LVED. N-linked (GlcNAc...) asparagine glycosylation is present at asparagine 1675. A helical membrane pass occupies residues 1854-1874; that stretch reads FILTIIVGIFLVATVPLTFVW. At 1875-2338 the chain is on the cytoplasmic side; that stretch reads HRSLKNHKAT…AHSGHGDVSE (464 aa). A Protein kinase domain is found at 1937-2210; the sequence is LSLRLLLGSG…YNIQDQLQLF (274 aa). ATP is bound by residues 1943-1951 and lysine 1972; that span reads LGSGAFGEV. Aspartate 2071 functions as the Proton acceptor in the catalytic mechanism. A Phosphotyrosine; by autocatalysis modification is found at tyrosine 2266. The tract at residues 2277–2314 is disordered; it reads EDRYEGPLGSKESGLHDLKKDERQPADKDFCQQPQVAY. Positions 2289–2306 are enriched in basic and acidic residues; it reads SGLHDLKKDERQPADKDF. Tyrosine 2325 is subject to Phosphotyrosine; by autocatalysis.

This sequence belongs to the protein kinase superfamily. Tyr protein kinase family. Insulin receptor subfamily. In terms of assembly, interacts with PTPN11; may activate the PI3 kinase-mTOR signaling pathway. Interacts with VAV3; constitutive interaction mediating VAV3 phosphorylation. Interacts with PTPN6 (via SH2 1 domain); the interaction is direct and promotes ROS1 dephosphorylation. In terms of processing, phosphorylated. Probably autophosphorylates. Phosphorylation at Tyr-2266 is required for the interaction with PTPN6 that mediates ROS1 dephosphorylation. Phosphorylation at Tyr-2266 stimulates the kinase activity and the activation of the ERK1 signaling cascade. Phosphorylation at Tyr-2266 and/or Tyr-2325 recruits PTPN11. As to expression, expressed in heart, lung, kidney and testis.

Its subcellular location is the cell membrane. The catalysed reaction is L-tyrosyl-[protein] + ATP = O-phospho-L-tyrosyl-[protein] + ADP + H(+). With respect to regulation, inhibited by dephosphorylation by PTPN6. Functionally, orphan receptor tyrosine kinase (RTK) that plays a role in epithelial cell differentiation and regionalization of the proximal epididymal epithelium. NELL2 is an endogenous ligand for ROS1. Upon endogenous stimulation by NELL2, ROS1 activates the intracellular signaling pathway and triggers epididymal epithelial differentiation and subsequent sperm maturation. May activate several downstream signaling pathways related to cell differentiation, proliferation, growth and survival including the PI3 kinase-mTOR signaling pathway. Mediates the phosphorylation of PTPN11, an activator of this pathway. May also phosphorylate and activate the transcription factor STAT3 to control anchorage-independent cell growth. Mediates the phosphorylation and the activation of VAV3, a guanine nucleotide exchange factor regulating cell morphology. May activate other downstream signaling proteins including AKT1, MAPK1, MAPK3, IRS1 and PLCG2. The protein is Proto-oncogene tyrosine-protein kinase ROS (Ros1) of Rattus norvegicus (Rat).